The primary structure comprises 796 residues: Fibroblast growth factor receptor 3 (796 aa).

The N-terminal stretch at 1 to 19 is a signal peptide; it reads MLVWLCGLCLVTLAGGRSA. The Extracellular segment spans residues 20–358; the sequence is ARLPLTEGRP…AEPVPDVDTS (339 aa). One can recognise an Ig-like C2-type 1 domain in the interval 21–119; sequence RLPLTEGRPT…VLRNVTVRVT (99 aa). Cysteines 56 and 102 form a disulfide. 2 N-linked (GlcNAc...) asparagine glycosylation sites follow: Asn91 and Asn113. The tract at residues 117–142 is disordered; sequence RVTDSPSSGDDEDDDEESESANAPKF. Residues 125-135 show a composition bias toward acidic residues; it reads GDDEDDDEESE. 2 Ig-like C2-type domains span residues 140–233 and 239–344; these read PKFT…YTLD and PHRP…AWLT. The cysteines at positions 165 and 217 are disulfide-linked. 5 N-linked (GlcNAc...) asparagine glycosylation sites follow: Asn214, Asn251, Asn283, Asn304, and Asn317. Cys264 and Cys328 are disulfide-bonded. A helical membrane pass occupies residues 359–379; it reads VSILAAAGCVAVVILVVIIIF. At 380 to 796 the chain is on the cytoplasmic side; sequence TYKMKMPSKK…HQQYNGVIRT (417 aa). In terms of domain architecture, Protein kinase spans 457–746; it reads LTLGKPLGEG…LTVTSTDEYL (290 aa). ATP is bound by residues 463-471 and Lys493; that span reads LGEGCFGQV. Asp602 acts as the Proton acceptor in catalysis. Tyr632, Tyr633, Tyr709, and Tyr745 each carry phosphotyrosine; by autocatalysis.

This sequence belongs to the protein kinase superfamily. Tyr protein kinase family. Fibroblast growth factor receptor subfamily. As to quaternary structure, monomer. Homodimer after ligand binding. Autophosphorylated. Binding of FGF family members together with heparan sulfate proteoglycan or heparin promotes receptor dimerization and autophosphorylation on tyrosine residues. Autophosphorylation occurs in trans between the two FGFR molecules present in the dimer. As to expression, undetectable in the adult skeletal muscle. Low levels of expression were detected in the liver, lung and kidney. Medium levels of expression were detected in the heart, spleen, intestine and eye. Highest expression is observed in the testis.

It is found in the cell membrane. The enzyme catalyses L-tyrosyl-[protein] + ATP = O-phospho-L-tyrosyl-[protein] + ADP + H(+). With respect to regulation, present in an inactive conformation in the absence of bound ligand. Ligand binding leads to dimerization and activation by autophosphorylation on tyrosine residues. Tyrosine-protein kinase that acts as a cell-surface receptor for fibroblast growth factors and plays an essential role in the regulation of cell proliferation, differentiation and apoptosis. Plays an essential role in the regulation of chondrocyte differentiation, proliferation and apoptosis, and is required for normal skeleton development. Regulates both osteogenesis and postnatal bone mineralization by osteoblasts. Promotes apoptosis in chondrocytes, but can also promote cancer cell proliferation. Phosphorylates PLCG1, CBL and FRS2. Ligand binding leads to the activation of several signaling cascades. Activation of PLCG1 leads to the production of the cellular signaling molecules diacylglycerol and inositol 1,4,5-trisphosphate. Phosphorylation of FRS2 triggers recruitment of GRB2, GAB1, PIK3R1 and SOS1, and mediates activation of RAS, MAPK1/ERK2, MAPK3/ERK1 and the MAP kinase signaling pathway, as well as of the AKT1 signaling pathway. The chain is Fibroblast growth factor receptor 3 (FGFR3) from Pleurodeles waltl (Iberian ribbed newt).